Reading from the N-terminus, the 222-residue chain is uncharacterized protein (222 aa).

The tat-type signal signal peptide spans 1-27 (MSFTRRKFVLGMGTVIFFTGSASSLLA). 4Fe-4S ferredoxin-type domains are found at residues 37-66 (YAMI…PAQG), 83-114 (TQYH…RDEQ), and 115-144 (GIVR…LNPV). Residues Cys-46, Cys-49, Cys-52, Cys-56, Cys-92, Cys-95, Cys-100, Cys-104, Cys-124, Cys-127, Cys-130, Cys-134, Cys-151, Cys-154, Cys-167, and Cys-171 each coordinate [4Fe-4S] cluster.

Predicted to be exported by the Tat system. The position of the signal peptide cleavage has not been experimentally proven.

This is an uncharacterized protein from Escherichia coli O157:H7.